Reading from the N-terminus, the 119-residue chain is Protein yippee-like 3 (119 aa).

A Yippee domain is found at 19-116; sequence RRYSCVHCRA…IELSHMIKDN (98 aa). Zn(2+)-binding residues include cysteine 23, cysteine 26, cysteine 79, and cysteine 82.

The protein belongs to the yippee family.

Its subcellular location is the nucleus. The protein localises to the nucleolus. May be involved in proliferation and apoptosis in myeloid precursor cells. The polypeptide is Protein yippee-like 3 (ypel3) (Oryzias latipes (Japanese rice fish)).